The primary structure comprises 218 residues: Ribonuclease HII (218 aa).

Residues glycine 12 to leucine 206 enclose the RNase H type-2 domain. A divalent metal cation is bound by residues aspartate 18, glutamate 19, and aspartate 115.

This sequence belongs to the RNase HII family. Mn(2+) serves as cofactor. The cofactor is Mg(2+).

The protein resides in the cytoplasm. The enzyme catalyses Endonucleolytic cleavage to 5'-phosphomonoester.. Endonuclease that specifically degrades the RNA of RNA-DNA hybrids. This Rhodospirillum rubrum (strain ATCC 11170 / ATH 1.1.1 / DSM 467 / LMG 4362 / NCIMB 8255 / S1) protein is Ribonuclease HII.